A 371-amino-acid chain; its full sequence is Deoxyhypusine synthase (371 aa).

NAD(+)-binding positions include 112-116 (SNLVT), 138-140 (SAG), Glu144, and Asp245. 143–144 (EE) lines the spermidine pocket. Asp250 is a spermidine binding site. Gly291 contacts NAD(+). A spermidine-binding site is contributed by His296. Residue 316-317 (TG) coordinates NAD(+). Spermidine-binding positions include 322–324 (GSD) and 331–337 (EAVSWGK). Lys337 acts as the Nucleophile in catalysis. NAD(+) is bound at residue 350–351 (EA).

This sequence belongs to the deoxyhypusine synthase family. The cofactor is NAD(+).

It carries out the reaction [eIF5A protein]-L-lysine + spermidine = [eIF5A protein]-deoxyhypusine + propane-1,3-diamine. The protein operates within protein modification; eIF5A hypusination. Functionally, catalyzes the NAD-dependent oxidative cleavage of spermidine and the subsequent transfer of the butylamine moiety of spermidine to the epsilon-amino group of a critical lysine residue of the eIF-5A precursor protein to form the intermediate deoxyhypusine residue. This is the first step of the post-translational modification of that lysine into an unusual amino acid residue named hypusine. Hypusination is unique to mature eIF-5A factor and is essential for its function. This is Deoxyhypusine synthase from Caenorhabditis elegans.